Reading from the N-terminus, the 550-residue chain is Tether containing UBX domain for GLUT4 (550 aa).

N-acetylalanine is present on alanine 2. The segment at 185–320 (AVRSKAPGSP…EPPVDRDPVV (136 aa)) is disordered. Phosphoserine is present on serine 193. Residues 193–206 (SPVSSLSADQASSS) are compositionally biased toward low complexity. Positions 217–226 (SRGDLNHEGD) are enriched in basic and acidic residues. Polar residues predominate over residues 242 to 252 (DAQTKQSTSEP). The interaction with GLUT4 stretch occupies residues 313-376 (PVDRDPVVYH…LVTKAFREAQ (64 aa)). The 77-residue stretch at 382 to 458 (ERYPKVALRV…NLFPAALVHF (77 aa)) folds into the UBX domain. A Phosphoserine modification is found at serine 496. The segment at 496 to 550 (SPPLLPAPDPVSLESEPIAEDGALGPPEPIQGTAQPVKRSLGKVPKWLKLPASKR) is disordered.

In terms of assembly, interacts with VCP. Interacts with VCPKMT. Interacts with GLUT4. Ubiquitous.

The protein localises to the endomembrane system. It is found in the endoplasmic reticulum-Golgi intermediate compartment membrane. It localises to the cytoplasm. The protein resides in the nucleus. Functionally, enhances VCP methylation catalyzed by VCPKMT. Tethering protein that sequesters GLUT4-containing vesicles in the cytoplasm in the absence of insulin. Modulates the amount of GLUT4 that is available at the cell surface. This chain is Tether containing UBX domain for GLUT4 (Aspscr1), found in Mus musculus (Mouse).